A 373-amino-acid chain; its full sequence is Putative zinc finger protein 012R (373 aa).

The segment at 2–29 adopts a C2H2-type zinc-finger fold; that stretch reads FECTHCDLHFESKSKLATHQKTKKCTAH.

This sequence belongs to the IIV-6 302L family.

This chain is Putative zinc finger protein 012R, found in Invertebrate iridescent virus 3 (IIV-3).